Consider the following 122-residue polypeptide: Large ribosomal subunit protein uL14 (122 aa).

The protein belongs to the universal ribosomal protein uL14 family. Part of the 50S ribosomal subunit. Forms a cluster with proteins L3 and L19. In the 70S ribosome, L14 and L19 interact and together make contacts with the 16S rRNA in bridges B5 and B8.

Its function is as follows. Binds to 23S rRNA. Forms part of two intersubunit bridges in the 70S ribosome. The chain is Large ribosomal subunit protein uL14 from Staphylococcus aureus (strain MW2).